A 505-amino-acid polypeptide reads, in one-letter code: Flagellin (505 aa).

Belongs to the bacterial flagellin family.

It localises to the secreted. The protein resides in the bacterial flagellum. Functionally, flagellin is the subunit protein which polymerizes to form the filaments of bacterial flagella. The chain is Flagellin (fliC) from Salmonella montevideo.